The sequence spans 129 residues: Small ribosomal subunit protein uS11 (129 aa).

The protein belongs to the universal ribosomal protein uS11 family. In terms of assembly, part of the 30S ribosomal subunit. Interacts with proteins S7 and S18. Binds to IF-3.

Its function is as follows. Located on the platform of the 30S subunit, it bridges several disparate RNA helices of the 16S rRNA. Forms part of the Shine-Dalgarno cleft in the 70S ribosome. The protein is Small ribosomal subunit protein uS11 of Nitrosospira multiformis (strain ATCC 25196 / NCIMB 11849 / C 71).